The primary structure comprises 449 residues: Bifunctional protein GlmU (449 aa).

The tract at residues 1–226 (MVIVAVLAAG…YEEILGVNDR (226 aa)) is pyrophosphorylase. UDP-N-acetyl-alpha-D-glucosamine-binding positions include 7-10 (LAAG), lysine 21, glutamine 73, and 78-79 (GT). Residue aspartate 103 coordinates Mg(2+). 4 residues coordinate UDP-N-acetyl-alpha-D-glucosamine: glycine 140, glutamate 155, asparagine 170, and asparagine 224. Asparagine 224 is a Mg(2+) binding site. Positions 227–247 (VQLAAAYQVLQNRIKKAWMQA) are linker. The segment at 248–449 (GVTLIDPASI…VVKPNWEPEA (202 aa)) is N-acetyltransferase. 2 residues coordinate UDP-N-acetyl-alpha-D-glucosamine: arginine 329 and lysine 347. Catalysis depends on histidine 359, which acts as the Proton acceptor. Positions 362 and 373 each coordinate UDP-N-acetyl-alpha-D-glucosamine. Acetyl-CoA is bound by residues alanine 376, 382 to 383 (NY), alanine 419, and arginine 436.

The protein in the N-terminal section; belongs to the N-acetylglucosamine-1-phosphate uridyltransferase family. In the C-terminal section; belongs to the transferase hexapeptide repeat family. In terms of assembly, homotrimer. The cofactor is Mg(2+).

It is found in the cytoplasm. It carries out the reaction alpha-D-glucosamine 1-phosphate + acetyl-CoA = N-acetyl-alpha-D-glucosamine 1-phosphate + CoA + H(+). It catalyses the reaction N-acetyl-alpha-D-glucosamine 1-phosphate + UTP + H(+) = UDP-N-acetyl-alpha-D-glucosamine + diphosphate. The protein operates within nucleotide-sugar biosynthesis; UDP-N-acetyl-alpha-D-glucosamine biosynthesis; N-acetyl-alpha-D-glucosamine 1-phosphate from alpha-D-glucosamine 6-phosphate (route II): step 2/2. It participates in nucleotide-sugar biosynthesis; UDP-N-acetyl-alpha-D-glucosamine biosynthesis; UDP-N-acetyl-alpha-D-glucosamine from N-acetyl-alpha-D-glucosamine 1-phosphate: step 1/1. Its pathway is bacterial outer membrane biogenesis; LPS lipid A biosynthesis. Catalyzes the last two sequential reactions in the de novo biosynthetic pathway for UDP-N-acetylglucosamine (UDP-GlcNAc). The C-terminal domain catalyzes the transfer of acetyl group from acetyl coenzyme A to glucosamine-1-phosphate (GlcN-1-P) to produce N-acetylglucosamine-1-phosphate (GlcNAc-1-P), which is converted into UDP-GlcNAc by the transfer of uridine 5-monophosphate (from uridine 5-triphosphate), a reaction catalyzed by the N-terminal domain. This chain is Bifunctional protein GlmU, found in Thermosynechococcus vestitus (strain NIES-2133 / IAM M-273 / BP-1).